A 458-amino-acid chain; its full sequence is Flavonol 3-O-glucosyltransferase UGT76E12 (458 aa).

Residue H25 is the Proton acceptor of the active site. H25 contacts an anthocyanidin. D118 serves as the catalytic Charge relay. Residues T140, A339, Q341, H356, W359, N360, S361, and E364 each contribute to the UDP-alpha-D-glucose site. Residue G379 participates in an anthocyanidin binding. D380 and Q381 together coordinate UDP-alpha-D-glucose.

The protein belongs to the UDP-glycosyltransferase family.

The enzyme catalyses a flavonol + UDP-alpha-D-glucose = a flavonol 3-O-beta-D-glucoside + UDP + H(+). It carries out the reaction a 7-O-hydroxy-flavonol + UDP-alpha-D-glucose = a flavonol 7-O-beta-D-glucoside + UDP + H(+). Functionally, possesses quercetin 3-O-glucosyltransferase and 7-O-glucosyltransferase activities in vitro. The chain is Flavonol 3-O-glucosyltransferase UGT76E12 from Arabidopsis thaliana (Mouse-ear cress).